We begin with the raw amino-acid sequence, 110 residues long: Large ribosomal subunit protein uL22 (110 aa).

This sequence belongs to the universal ribosomal protein uL22 family. As to quaternary structure, part of the 50S ribosomal subunit.

Its function is as follows. This protein binds specifically to 23S rRNA; its binding is stimulated by other ribosomal proteins, e.g. L4, L17, and L20. It is important during the early stages of 50S assembly. It makes multiple contacts with different domains of the 23S rRNA in the assembled 50S subunit and ribosome. The globular domain of the protein is located near the polypeptide exit tunnel on the outside of the subunit, while an extended beta-hairpin is found that lines the wall of the exit tunnel in the center of the 70S ribosome. In Halorhodospira halophila (strain DSM 244 / SL1) (Ectothiorhodospira halophila (strain DSM 244 / SL1)), this protein is Large ribosomal subunit protein uL22.